The sequence spans 1361 residues: DNA-directed RNA polymerase subunit beta (1361 aa).

It belongs to the RNA polymerase beta chain family. As to quaternary structure, the RNAP catalytic core consists of 2 alpha, 1 beta, 1 beta' and 1 omega subunit. When a sigma factor is associated with the core the holoenzyme is formed, which can initiate transcription.

The enzyme catalyses RNA(n) + a ribonucleoside 5'-triphosphate = RNA(n+1) + diphosphate. Its function is as follows. DNA-dependent RNA polymerase catalyzes the transcription of DNA into RNA using the four ribonucleoside triphosphates as substrates. The polypeptide is DNA-directed RNA polymerase subunit beta (Saccharophagus degradans (strain 2-40 / ATCC 43961 / DSM 17024)).